A 317-amino-acid chain; its full sequence is Putative HTH-type transcriptional regulatory protein Mboo_0195 (317 aa).

The HTH cro/C1-type domain occupies 132 to 185; that stretch reads LRELRERRSMSLGDLGQVLGVSRRTISKYESGMGTTLEVAIRIEEYFNTGVVES. Positions 143–162 form a DNA-binding region, H-T-H motif; the sequence is LGDLGQVLGVSRRTISKYES.

This chain is Putative HTH-type transcriptional regulatory protein Mboo_0195, found in Methanoregula boonei (strain DSM 21154 / JCM 14090 / 6A8).